A 540-amino-acid polypeptide reads, in one-letter code: Protein dml-1 (540 aa).

The disordered stretch occupies residues 517–540; that stretch reads NELAEMADEYHEGWSSGSDDGDDD.

Belongs to the misato family.

Its subcellular location is the mitochondrion. Functionally, involved in the partitioning of the mitochondrial organelle and mitochondrial DNA (mtDNA) inheritance. The chain is Protein dml-1 (dml-1) from Neurospora crassa (strain ATCC 24698 / 74-OR23-1A / CBS 708.71 / DSM 1257 / FGSC 987).